The chain runs to 517 residues: FAD-dependent monooxygenase FUP4 (517 aa).

Residues 1–19 (MRQSSTLTWTSVLLAPLAA) form the signal peptide. The FAD-binding PCMH-type domain maps to 75-246 (QALRPACLVH…TRFDLDLYDQ (172 aa)). Pros-8alpha-FAD histidine is present on His-112. Asn-163, Asn-208, and Asn-346 each carry an N-linked (GlcNAc...) asparagine glycan.

The protein belongs to the oxygen-dependent FAD-linked oxidoreductase family. Requires FAD as cofactor.

The protein operates within secondary metabolite biosynthesis; terpenoid biosynthesis. Its function is as follows. FAD-dependent monooxygenase; part of the gene cluster that mediates the biosynthesis of the mycotoxin fusaproliferin (FUP) that belongs to the class of bicyclic sesterterpenoids. FUP4 catalyzes the oxidation of the hydroxy group at the C-16 position of preterpestacin III to a keto group, leading to the formation of (-)-terpestacin. The product of FUP1, preterpestacin I, might also serve as a substrate of FUP4 to yield oxo-preterpestacin I. The FUP biosynthetic pathway starts with the enzyme encoded by FUP1 that combines a C-terminal prenyltransferase domain responsible for the synthesis of geranylgeranyl diphosphate with the N-terminal terpene cyclase domain, to yield preterpestacin I. Preterpestacin I is then decorated by oxygenation steps that are catalyzed by two cytochrome P450 monooxygenases. First, FUP2 introduces a hydroxyl group at the C-24 position resulting in the formation of preterpestacin IIa. The second P450 monooxygenase catalyzes the hydroxylation at C-16 and C-17 of preterpestacin IIa, producing preterpestacin III. Subsequently, the FAD-dependent oxidoreductase FUP4 catalyzes the oxidation of the hydroxy group at the C-16 position to a keto group, leading to the formation of (-)-terpestacin, which is the immediate precursor of FUP. The final step in the proposed biosynthetic pathway is the addition of an acetyl group at the C-24 position of terpestacin, which is catalyzed by the acetyltransferase FUP5. In Fusarium proliferatum (strain ET1) (Orchid endophyte fungus), this protein is FAD-dependent monooxygenase FUP4.